The chain runs to 326 residues: Aspartate carbamoyltransferase catalytic subunit (326 aa).

Positions 55 and 56 each coordinate carbamoyl phosphate. Lysine 83 provides a ligand contact to L-aspartate. Carbamoyl phosphate-binding residues include arginine 105, histidine 135, and glutamine 138. Residues arginine 176 and arginine 230 each coordinate L-aspartate. Glycine 271 and proline 272 together coordinate carbamoyl phosphate.

This sequence belongs to the aspartate/ornithine carbamoyltransferase superfamily. ATCase family. As to quaternary structure, heterododecamer (2C3:3R2) of six catalytic PyrB chains organized as two trimers (C3), and six regulatory PyrI chains organized as three dimers (R2).

It catalyses the reaction carbamoyl phosphate + L-aspartate = N-carbamoyl-L-aspartate + phosphate + H(+). Its pathway is pyrimidine metabolism; UMP biosynthesis via de novo pathway; (S)-dihydroorotate from bicarbonate: step 2/3. Catalyzes the condensation of carbamoyl phosphate and aspartate to form carbamoyl aspartate and inorganic phosphate, the committed step in the de novo pyrimidine nucleotide biosynthesis pathway. This is Aspartate carbamoyltransferase catalytic subunit from Streptomyces coelicolor (strain ATCC BAA-471 / A3(2) / M145).